The primary structure comprises 367 residues: Leucine-rich repeat-containing protein 28 (367 aa).

9 LRR repeats span residues 16 to 36 (KHKN…ELLK), 42 to 63 (YLER…LAQK), 66 to 87 (NLVE…IGSL), 89 to 111 (KLQS…GRLK), 112 to 133 (SLRH…IGKL), 135 to 156 (ELQT…LYQC), 158 to 179 (SLQY…LCQL), 181 to 202 (SLNE…LGRS), and 204 to 226 (ELQY…LYNK).

In Xenopus tropicalis (Western clawed frog), this protein is Leucine-rich repeat-containing protein 28 (lrrc28).